A 464-amino-acid polypeptide reads, in one-letter code: Argininosuccinate lyase (464 aa).

It belongs to the lyase 1 family. Argininosuccinate lyase subfamily.

The protein resides in the cytoplasm. The catalysed reaction is 2-(N(omega)-L-arginino)succinate = fumarate + L-arginine. The protein operates within amino-acid biosynthesis; L-arginine biosynthesis; L-arginine from L-ornithine and carbamoyl phosphate: step 3/3. This Chlorobium phaeobacteroides (strain DSM 266 / SMG 266 / 2430) protein is Argininosuccinate lyase.